Here is a 118-residue protein sequence, read N- to C-terminus: Ferredoxin-thioredoxin reductase, catalytic chain (118 aa).

Cysteine 56 contacts [4Fe-4S] cluster. Catalysis depends on cysteine 58, which acts as the Nucleophile. A disulfide bridge links cysteine 58 with cysteine 88. Residues cysteine 75, cysteine 77, and cysteine 86 each coordinate [4Fe-4S] cluster.

This sequence belongs to the ferredoxin thioredoxin reductase beta subunit family. In terms of assembly, heterodimer of subunit A (variable subunit) and subunit B (catalytic subunit). Heterodimeric FTR forms a complex with ferredoxin and thioredoxin. [4Fe-4S] cluster serves as cofactor.

It catalyses the reaction [thioredoxin]-disulfide + 2 reduced [2Fe-2S]-[ferredoxin] + 2 H(+) = [thioredoxin]-dithiol + 2 oxidized [2Fe-2S]-[ferredoxin]. Catalytic subunit of the ferredoxin-thioredoxin reductase (FTR), which catalyzes the two-electron reduction of thioredoxins by the electrons provided by reduced ferredoxin. This is Ferredoxin-thioredoxin reductase, catalytic chain from Synechocystis sp. (strain ATCC 27184 / PCC 6803 / Kazusa).